Here is a 1059-residue protein sequence, read N- to C-terminus: Tyrosine-protein kinase-like otk (1059 aa).

The signal sequence occupies residues 1-23; the sequence is MDMLMMWSICLFVCIFMAPFSCG. Residues 24–597 lie on the Extracellular side of the membrane; that stretch reads SGSSSRFIQV…GDGGFLATRA (574 aa). Ig-like C2-type domains are found at residues 28-112, 113-202, 258-377, 380-475, and 480-570; these read SRFI…REAS, PTAK…RVMS, PEGL…LAIN, PGIL…VSIN, and PKFS…AVLT. Asn-42 is a glycosylation site (N-linked (GlcNAc...) asparagine). 4 cysteine pairs are disulfide-bonded: Cys-49–Cys-99, Cys-141–Cys-191, Cys-283–Cys-366, and Cys-411–Cys-459. Residues Asn-348, Asn-429, Asn-441, Asn-456, Asn-469, Asn-524, and Asn-536 are each glycosylated (N-linked (GlcNAc...) asparagine). Residues Cys-502 and Cys-554 are joined by a disulfide bond. The chain crosses the membrane as a helical span at residues 598-618; sequence VLITMTVALAYIVLVVGLMLW. Residues 619 to 1059 are Cytoplasmic-facing; it reads CRYRRQARKA…ALSKAMQNSE (441 aa). The segment at 639-695 is disordered; that stretch reads GGEQAGGEGSTSGNPKASEQEPCLGKQQRNGRNGKSKSNGDPQKSDDTACSQQSRAS. Residues 665–693 are compositionally biased toward polar residues; the sequence is QQRNGRNGKSKSNGDPQKSDDTACSQQSR. Phosphoserine is present on Ser-698. Residues 712–1055 enclose the Protein kinase; inactive domain; that stretch reads LSELIQIGRG…QLGAALSKAM (344 aa). The interval 739–781 is disordered; it reads AQANDKDSDNDKQHSNSENGSGGSSGSTTLSTLNEKRRSKTSM. The segment covering 742–753 has biased composition (basic and acidic residues); it reads NDKDSDNDKQHS.

Belongs to the protein kinase superfamily. Tyr protein kinase family. Insulin receptor subfamily. Interacts with plexA; component of a receptor complex that mediates the repulsive signaling in response to Semaphorin ligands.

The protein resides in the cell membrane. Functionally, acts as a calcium-dependent, homophilic cell adhesion molecule that regulates neural recognition during the development of the nervous system. Component of the repulsive Plexin signaling response to regulate motor axon guidance at the embryonic stage. Also component of a receptor complex that is required in the adult visual system to innervate the lamina layer; specific targeting of R1-R6 axons. In Drosophila willistoni (Fruit fly), this protein is Tyrosine-protein kinase-like otk.